The following is a 323-amino-acid chain: Transaldolase (323 aa).

Lys131 serves as the catalytic Schiff-base intermediate with substrate.

The protein belongs to the transaldolase family. Type 1 subfamily. Homodimer.

Its subcellular location is the cytoplasm. It catalyses the reaction D-sedoheptulose 7-phosphate + D-glyceraldehyde 3-phosphate = D-erythrose 4-phosphate + beta-D-fructose 6-phosphate. Its pathway is carbohydrate degradation; pentose phosphate pathway; D-glyceraldehyde 3-phosphate and beta-D-fructose 6-phosphate from D-ribose 5-phosphate and D-xylulose 5-phosphate (non-oxidative stage): step 2/3. Transaldolase is important for the balance of metabolites in the pentose-phosphate pathway. The polypeptide is Transaldolase (Blochmanniella floridana).